Consider the following 190-residue polypeptide: Holliday junction branch migration complex subunit RuvA (190 aa).

The tract at residues M1 to A65 is domain I. The domain II stretch occupies residues N66 to L137. The tract at residues L137 to A141 is flexible linker. Positions A142–K190 are domain III.

The protein belongs to the RuvA family. Homotetramer. Forms an RuvA(8)-RuvB(12)-Holliday junction (HJ) complex. HJ DNA is sandwiched between 2 RuvA tetramers; dsDNA enters through RuvA and exits via RuvB. An RuvB hexamer assembles on each DNA strand where it exits the tetramer. Each RuvB hexamer is contacted by two RuvA subunits (via domain III) on 2 adjacent RuvB subunits; this complex drives branch migration. In the full resolvosome a probable DNA-RuvA(4)-RuvB(12)-RuvC(2) complex forms which resolves the HJ.

It is found in the cytoplasm. Functionally, the RuvA-RuvB-RuvC complex processes Holliday junction (HJ) DNA during genetic recombination and DNA repair, while the RuvA-RuvB complex plays an important role in the rescue of blocked DNA replication forks via replication fork reversal (RFR). RuvA specifically binds to HJ cruciform DNA, conferring on it an open structure. The RuvB hexamer acts as an ATP-dependent pump, pulling dsDNA into and through the RuvAB complex. HJ branch migration allows RuvC to scan DNA until it finds its consensus sequence, where it cleaves and resolves the cruciform DNA. The protein is Holliday junction branch migration complex subunit RuvA of Anaplasma marginale (strain Florida).